The chain runs to 67 residues: Large ribosomal subunit protein bL35 (67 aa).

The disordered stretch occupies residues 1–41; sequence MPKMKTHRGAAKRFKKTGTGKLKRSHAYTSHMFRHKSQKQK.

It belongs to the bacterial ribosomal protein bL35 family.

In Shouchella clausii (strain KSM-K16) (Alkalihalobacillus clausii), this protein is Large ribosomal subunit protein bL35.